Reading from the N-terminus, the 193-residue chain is Probable DNA-directed RNA polymerase subunit delta (193 aa).

One can recognise an HTH HARE-type domain in the interval 14–83 (LSMIEVARAI…GDNKWGLRSW (70 aa)). 2 stretches are compositionally biased toward acidic residues: residues 119 to 133 (EDAI…EDEN) and 143 to 193 (YDND…ETND). The segment at 119-193 (EDAIDYNDDD…DDDYEDETND (75 aa)) is disordered.

The protein belongs to the RpoE family. As to quaternary structure, RNAP is composed of a core of 2 alpha, a beta and a beta' subunits. The core is associated with a delta subunit and one of several sigma factors.

Participates in both the initiation and recycling phases of transcription. In the presence of the delta subunit, RNAP displays an increased specificity of transcription, a decreased affinity for nucleic acids, and an increased efficiency of RNA synthesis because of enhanced recycling. The polypeptide is Probable DNA-directed RNA polymerase subunit delta (Streptococcus thermophilus (strain CNRZ 1066)).